We begin with the raw amino-acid sequence, 311 residues long: Protoheme IX farnesyltransferase (311 aa).

9 helical membrane passes run 32–52 (VMSL…VPIN), 53–73 (PWYG…AGAL), 104–124 (FIFG…FINW), 125–145 (FAAF…TIWL), 153–173 (IVIG…VTTG), 180–200 (FLLF…LSLF), 224–244 (KQIL…CFTG), 245–265 (LGGV…IYFA), and 285–305 (FFFS…ESLV).

It belongs to the UbiA prenyltransferase family. Protoheme IX farnesyltransferase subfamily.

The protein resides in the cell inner membrane. The enzyme catalyses heme b + (2E,6E)-farnesyl diphosphate + H2O = Fe(II)-heme o + diphosphate. Its pathway is porphyrin-containing compound metabolism; heme O biosynthesis; heme O from protoheme: step 1/1. In terms of biological role, converts heme B (protoheme IX) to heme O by substitution of the vinyl group on carbon 2 of heme B porphyrin ring with a hydroxyethyl farnesyl side group. The sequence is that of Protoheme IX farnesyltransferase from Bartonella tribocorum (strain CIP 105476 / IBS 506).